The primary structure comprises 145 residues: Basic phospholipase A2 PC16 (145 aa).

Residues 1-21 form the signal peptide; sequence MYPAHLLLLLAVCVSLLGASA. The propeptide occupies 22-27; that stretch reads IPPLPL. 7 disulfides stabilise this stretch: C38–C98, C54–C144, C56–C72, C71–C125, C78–C118, C87–C111, and C105–C116. Residues Y55, G57, and G59 each contribute to the Ca(2+) site. H75 is an active-site residue. Ca(2+) is bound at residue D76. D119 is a catalytic residue.

This sequence belongs to the phospholipase A2 family. Group I subfamily. D49 sub-subfamily. The cofactor is Ca(2+).

Its subcellular location is the secreted. The enzyme catalyses a 1,2-diacyl-sn-glycero-3-phosphocholine + H2O = a 1-acyl-sn-glycero-3-phosphocholine + a fatty acid + H(+). Functionally, PLA2 catalyzes the calcium-dependent hydrolysis of the 2-acyl groups in 3-sn-phosphoglycerides. This is Basic phospholipase A2 PC16 from Laticauda laticaudata (Blue-ringed sea krait).